Reading from the N-terminus, the 499-residue chain is Probable cytosol aminopeptidase (499 aa).

2 residues coordinate Mn(2+): lysine 269 and aspartate 274. The active site involves lysine 281. Positions 292, 351, and 353 each coordinate Mn(2+). Arginine 355 is a catalytic residue.

The protein belongs to the peptidase M17 family. The cofactor is Mn(2+).

Its subcellular location is the cytoplasm. It catalyses the reaction Release of an N-terminal amino acid, Xaa-|-Yaa-, in which Xaa is preferably Leu, but may be other amino acids including Pro although not Arg or Lys, and Yaa may be Pro. Amino acid amides and methyl esters are also readily hydrolyzed, but rates on arylamides are exceedingly low.. It carries out the reaction Release of an N-terminal amino acid, preferentially leucine, but not glutamic or aspartic acids.. Its function is as follows. Presumably involved in the processing and regular turnover of intracellular proteins. Catalyzes the removal of unsubstituted N-terminal amino acids from various peptides. This is Probable cytosol aminopeptidase from Haemophilus ducreyi (strain 35000HP / ATCC 700724).